The primary structure comprises 416 residues: Squalene synthase (416 aa).

Transmembrane regions (helical) follow at residues 285–304 and 386–406; these read VINFCAIPQVMAIGTLNACY and FISYDWMAVTSLAVSSAFLIA.

The protein belongs to the phytoene/squalene synthase family. Mg(2+) is required as a cofactor.

Its subcellular location is the endoplasmic reticulum membrane. The catalysed reaction is 2 (2E,6E)-farnesyl diphosphate + NADPH + H(+) = squalene + 2 diphosphate + NADP(+). The enzyme catalyses 2 (2E,6E)-farnesyl diphosphate + NADH + H(+) = squalene + 2 diphosphate + NAD(+). It participates in terpene metabolism; lanosterol biosynthesis; lanosterol from farnesyl diphosphate: step 1/3. The polypeptide is Squalene synthase (fdfT) (Dictyostelium discoideum (Social amoeba)).